A 939-amino-acid polypeptide reads, in one-letter code: Protein translocase subunit SecA 1 (939 aa).

Residues Gln-85, 103–107 (GEGKT), and Asp-504 contribute to the ATP site. Residues 848-939 (EVPVEDEKPS…QSKGGRRRKK (92 aa)) form a disordered region. Composition is skewed to basic and acidic residues over residues 852–863 (EDEKPSLEKEDA), 872–889 (PEIR…DRLH), and 914–925 (PVRSEADGLTRA). Over residues 926–939 (ERRKQSKGGRRRKK) the composition is skewed to basic residues.

It belongs to the SecA family. In terms of assembly, monomer and homodimer. Part of the essential Sec protein translocation apparatus which comprises SecA, SecYEG and auxiliary proteins SecDF. Other proteins may also be involved.

It is found in the cell membrane. The protein localises to the cytoplasm. It catalyses the reaction ATP + H2O + cellular proteinSide 1 = ADP + phosphate + cellular proteinSide 2.. Part of the Sec protein translocase complex. Interacts with the SecYEG preprotein conducting channel. Has a central role in coupling the hydrolysis of ATP to the transfer of proteins into and across the cell membrane, serving as an ATP-driven molecular motor driving the stepwise translocation of polypeptide chains across the membrane. The chain is Protein translocase subunit SecA 1 from Streptomyces avermitilis (strain ATCC 31267 / DSM 46492 / JCM 5070 / NBRC 14893 / NCIMB 12804 / NRRL 8165 / MA-4680).